We begin with the raw amino-acid sequence, 398 residues long: Cytochrome b (398 aa).

A run of 4 helical transmembrane segments spans residues 38-58, 82-104, 119-139, and 185-205; these read FGSL…FLAM, WLLR…LHIF, VWCL…IGYV, and FFSL…LHLA. The heme b site is built by His88 and His102. Heme b contacts are provided by His189 and His203. His208 is an a ubiquinone binding site. The next 4 helical transmembrane spans lie at 231 to 251, 295 to 315, 327 to 347, and 354 to 373; these read FYVK…IWIF, AGGV…PFFK, IYQG…WIGC, and FVTI…AITP.

Belongs to the cytochrome b family. As to quaternary structure, the main subunits of complex b-c1 are: cytochrome b, cytochrome c1 and the Rieske protein. Requires heme b as cofactor.

It is found in the mitochondrion inner membrane. Functionally, component of the ubiquinol-cytochrome c reductase complex (complex III or cytochrome b-c1 complex) that is part of the mitochondrial respiratory chain. The b-c1 complex mediates electron transfer from ubiquinol to cytochrome c. Contributes to the generation of a proton gradient across the mitochondrial membrane that is then used for ATP synthesis. The protein is Cytochrome b (MT-CYB) of Triticum aestivum (Wheat).